The chain runs to 190 residues: Abscisic acid receptor PYL2 (190 aa).

The START-like stretch occupies residues 28 to 182 (FEPDPTTCTS…NLQKLGVAAT (155 aa)). Abscisate is bound by residues Lys-64, 93-98 (ASTSTE), 120-126 (RLKNYKS), and Glu-147. The short motif at 89–93 (SGLPA) is the Gate loop element. The Latch loop signature appears at 119–121 (HRL).

Belongs to the PYR/PYL/RCAR abscisic acid intracellular receptor family. Homodimer. Binds ABA on one subunit only. Interacts with HAB1, ABI1 and ABI2, and possibly with other PP2Cs. Binds to CARs protein in an ABA-independent manner, both at the plasma membrane and in the nucleus.

Its subcellular location is the cytoplasm. The protein resides in the nucleus. It localises to the cell membrane. Functionally, receptor for abscisic acid (ABA) required for ABA-mediated responses such as stomatal closure and germination inhibition. Inhibits the activity of group-A protein phosphatases type 2C (PP2Cs) when activated by ABA. Can be activated by both (-)-ABA and (+)-ABA. This Arabidopsis thaliana (Mouse-ear cress) protein is Abscisic acid receptor PYL2 (PYL2).